We begin with the raw amino-acid sequence, 428 residues long: Serine--tRNA ligase (428 aa).

231 to 233 provides a ligand contact to L-serine; it reads TAE. 262–264 serves as a coordination point for ATP; that stretch reads RSE. Position 285 (E285) interacts with L-serine. ATP is bound at residue 349 to 352; that stretch reads EISS. S385 contributes to the L-serine binding site.

It belongs to the class-II aminoacyl-tRNA synthetase family. Type-1 seryl-tRNA synthetase subfamily. In terms of assembly, homodimer. The tRNA molecule binds across the dimer.

It localises to the cytoplasm. The catalysed reaction is tRNA(Ser) + L-serine + ATP = L-seryl-tRNA(Ser) + AMP + diphosphate + H(+). It carries out the reaction tRNA(Sec) + L-serine + ATP = L-seryl-tRNA(Sec) + AMP + diphosphate + H(+). It functions in the pathway aminoacyl-tRNA biosynthesis; selenocysteinyl-tRNA(Sec) biosynthesis; L-seryl-tRNA(Sec) from L-serine and tRNA(Sec): step 1/1. In terms of biological role, catalyzes the attachment of serine to tRNA(Ser). Is also able to aminoacylate tRNA(Sec) with serine, to form the misacylated tRNA L-seryl-tRNA(Sec), which will be further converted into selenocysteinyl-tRNA(Sec). The polypeptide is Serine--tRNA ligase (Staphylococcus aureus (strain MSSA476)).